We begin with the raw amino-acid sequence, 426 residues long: D-tagatose-1,6-bisphosphate aldolase subunit KbaZ (426 aa).

This sequence belongs to the GatZ/KbaZ family. KbaZ subfamily. Forms a complex with KbaY.

It functions in the pathway carbohydrate metabolism; D-tagatose 6-phosphate degradation; D-glyceraldehyde 3-phosphate and glycerone phosphate from D-tagatose 6-phosphate: step 2/2. Its function is as follows. Component of the tagatose-1,6-bisphosphate aldolase KbaYZ that is required for full activity and stability of the Y subunit. Could have a chaperone-like function for the proper and stable folding of KbaY. When expressed alone, KbaZ does not show any aldolase activity. This chain is D-tagatose-1,6-bisphosphate aldolase subunit KbaZ, found in Escherichia coli O157:H7.